A 410-amino-acid polypeptide reads, in one-letter code: ORC1-type DNA replication protein 2 (410 aa).

Residues 60–65 (GIGKTT), Tyr213, and Arg225 each bind ATP.

It belongs to the CDC6/cdc18 family.

Its function is as follows. Involved in regulation of DNA replication. Binds DNA. The protein is ORC1-type DNA replication protein 2 (orc2) of Aeropyrum pernix (strain ATCC 700893 / DSM 11879 / JCM 9820 / NBRC 100138 / K1).